We begin with the raw amino-acid sequence, 530 residues long: Estrogen receptor beta (530 aa).

A modulating region spans residues 1-148; it reads MDIKNSPSSL…GPSSKRDAHF (148 aa). At S61 the chain carries Phosphoserine; alternate. S61 carries O-linked (GlcNAc) serine; alternate glycosylation. Phosphoserine; by MAPK is present on residues S87 and S105. NR C4-type zinc fingers lie at residues 149 to 169 and 185 to 209; these read CAVC…CEGC and CPAT…LRKC. The nuclear receptor DNA-binding region spans 149–214; that stretch reads CAVCSDYASG…RLRKCYEVGM (66 aa). Residues 264 to 498 form the NR LBD domain; that stretch reads SPEQLVLTLL…DLLLEMMNAH (235 aa). Residues 507–530 are disordered; that stretch reads ITGSECSPAEDSKSTEGSQNPQSP. The segment covering 521 to 530 has biased composition (polar residues); the sequence is TEGSQNPQSP.

Belongs to the nuclear hormone receptor family. NR3 subfamily. In terms of assembly, binds DNA as a homodimer. Can form a heterodimer with ESR1. Interacts with NCOA1, NCOA3, NCOA5 and NCOA6 coactivators, leading to a strong increase of transcription of target genes. Interacts with UBE1C and AKAP13. Interacts with DNTTIP2. Interacts with CCDC62 in the presence of estradiol/E2; this interaction seems to enhance the transcription of target genes. Interacts with DNAAF4. Interacts with PRMT2. Interacts with CCAR2 (via N-terminus) in a ligand-independent manner. Interacts with RBM39, in the presence of estradiol (E2). Interacts with STUB1/CHIP. Phosphorylation at Ser-87 and Ser-105 recruits NCOA1.

It localises to the nucleus. Functionally, nuclear hormone receptor. Binds estrogens with an affinity similar to that of ESR1/ER-alpha, and activates expression of reporter genes containing estrogen response elements (ERE) in an estrogen-dependent manner. The sequence is that of Estrogen receptor beta (ESR2) from Callithrix jacchus (White-tufted-ear marmoset).